Here is a 204-residue protein sequence, read N- to C-terminus: Photosystem I reaction center subunit II-2, chloroplastic (204 aa).

The transit peptide at 1–44 directs the protein to the chloroplast; it reads MATQAAGIFSPAITTTTSAVKKLHLFSSSHRPKSLSFTKTAIRA. Thr47 carries the post-translational modification Phosphothreonine. The disordered stretch occupies residues 47–71; that stretch reads TESSSAAPAVKEAPVGFTPPQLDPN. The ferredoxin and ferredoxin-oxidoreductase binding stretch occupies residues 137-145; it reads RLRSKYKIT.

This sequence belongs to the PsaD family. Interacts with CURT1C.

It localises to the plastid. The protein localises to the chloroplast thylakoid membrane. Its function is as follows. PSAD can form complexes with ferredoxin and ferredoxin-oxidoreductase in photosystem I (PS I) reaction center. PSAD may encode the ferredoxin-docking protein. The protein is Photosystem I reaction center subunit II-2, chloroplastic (PSAD2) of Arabidopsis thaliana (Mouse-ear cress).